Reading from the N-terminus, the 154-residue chain is Histone H2B.5 (154 aa).

Residues methionine 1 to proline 25 show a composition bias toward basic and acidic residues. The interval methionine 1–lysine 62 is disordered. N6-acetyllysine occurs at positions 7 and 39. Residue lysine 150 forms a Glycyl lysine isopeptide (Lys-Gly) (interchain with G-Cter in ubiquitin) linkage.

It belongs to the histone H2B family. The nucleosome is a histone octamer containing two molecules each of H2A, H2B, H3 and H4 assembled in one H3-H4 heterotetramer and two H2A-H2B heterodimers. The octamer wraps approximately 147 bp of DNA. Can be acetylated to form H2BK6ac and H2BK33ac. Post-translationally, monoubiquitinated to form H2BK143ub1; may give a specific tag for epigenetic transcriptional activation.

The protein localises to the nucleus. It is found in the chromosome. In terms of biological role, core component of nucleosome. Nucleosomes wrap and compact DNA into chromatin, limiting DNA accessibility to the cellular machineries which require DNA as a template. Histones thereby play a central role in transcription regulation, DNA repair, DNA replication and chromosomal stability. DNA accessibility is regulated via a complex set of post-translational modifications of histones, also called histone code, and nucleosome remodeling. The chain is Histone H2B.5 from Zea mays (Maize).